Consider the following 323-residue polypeptide: UDP-glucuronate 4-epimerase (323 aa).

Residue 11 to 13 (GFI) coordinates NAD(+). Y152 serves as the catalytic Proton acceptor. An NAD(+)-binding site is contributed by K156.

This sequence belongs to the NAD(P)-dependent epimerase/dehydratase family. It depends on NAD(+) as a cofactor.

The catalysed reaction is UDP-alpha-D-glucuronate = UDP-alpha-D-galacturonate. Catalyzes the interconversion of UDP-D-glucuronic acid (UDP-GlcA) and UDP-D-galacturonic acid (UDP-GalA). This chain is UDP-glucuronate 4-epimerase, found in Thermodesulfobacterium geofontis (strain OPF15).